A 215-amino-acid polypeptide reads, in one-letter code: Mediator of RNA polymerase II transcription subunit 18 (215 aa).

Belongs to the Mediator complex subunit 18 family. In terms of assembly, component of the Mediator complex.

The protein localises to the nucleus. Functionally, component of the Mediator complex, a coactivator involved in the regulated transcription of nearly all RNA polymerase II-dependent genes. Mediator functions as a bridge to convey information from gene-specific regulatory proteins to the basal RNA polymerase II transcription machinery. Mediator is recruited to promoters by direct interactions with regulatory proteins and serves as a scaffold for the assembly of a functional preinitiation complex with RNA polymerase II and the general transcription factors. In Aedes aegypti (Yellowfever mosquito), this protein is Mediator of RNA polymerase II transcription subunit 18 (MED18).